The chain runs to 220 residues: GTP cyclohydrolase 1 (220 aa).

Cysteine 113, histidine 116, and cysteine 184 together coordinate Zn(2+).

Belongs to the GTP cyclohydrolase I family. Homomer.

The catalysed reaction is GTP + H2O = 7,8-dihydroneopterin 3'-triphosphate + formate + H(+). It participates in cofactor biosynthesis; 7,8-dihydroneopterin triphosphate biosynthesis; 7,8-dihydroneopterin triphosphate from GTP: step 1/1. This chain is GTP cyclohydrolase 1, found in Hamiltonella defensa subsp. Acyrthosiphon pisum (strain 5AT).